A 162-amino-acid polypeptide reads, in one-letter code: UPF0303 protein Arad_3071 (162 aa).

Belongs to the UPF0303 family.

This is UPF0303 protein Arad_3071 from Rhizobium rhizogenes (strain K84 / ATCC BAA-868) (Agrobacterium radiobacter).